Consider the following 356-residue polypeptide: Phospho-N-acetylmuramoyl-pentapeptide-transferase (356 aa).

A run of 10 helical transmembrane segments spans residues 3 to 23 (QILF…PLLI), 51 to 71 (TMGG…AKVI), 80 to 100 (GLLV…DDYI), 114 to 134 (AKMA…LQFP), 152 to 172 (FGWS…ILAM), 185 to 205 (LATG…LWQF), 227 to 247 (PLDL…FLWW), 254 to 274 (IFMG…LAIL), 279 to 299 (FLLA…VIQV), and 333 to 353 (FWII…AGWA).

Belongs to the glycosyltransferase 4 family. MraY subfamily. Mg(2+) is required as a cofactor.

The protein localises to the cell membrane. The catalysed reaction is UDP-N-acetyl-alpha-D-muramoyl-L-alanyl-gamma-D-glutamyl-meso-2,6-diaminopimeloyl-D-alanyl-D-alanine + di-trans,octa-cis-undecaprenyl phosphate = di-trans,octa-cis-undecaprenyl diphospho-N-acetyl-alpha-D-muramoyl-L-alanyl-D-glutamyl-meso-2,6-diaminopimeloyl-D-alanyl-D-alanine + UMP. Its pathway is cell wall biogenesis; peptidoglycan biosynthesis. Functionally, catalyzes the initial step of the lipid cycle reactions in the biosynthesis of the cell wall peptidoglycan: transfers peptidoglycan precursor phospho-MurNAc-pentapeptide from UDP-MurNAc-pentapeptide onto the lipid carrier undecaprenyl phosphate, yielding undecaprenyl-pyrophosphoryl-MurNAc-pentapeptide, known as lipid I. The chain is Phospho-N-acetylmuramoyl-pentapeptide-transferase from Streptomyces griseus subsp. griseus (strain JCM 4626 / CBS 651.72 / NBRC 13350 / KCC S-0626 / ISP 5235).